A 563-amino-acid polypeptide reads, in one-letter code: Sulfite reductase [NADPH] hemoprotein beta-component (563 aa).

[4Fe-4S] cluster contacts are provided by Cys427, Cys433, Cys472, and Cys476. Residue Cys476 coordinates siroheme.

The protein belongs to the nitrite and sulfite reductase 4Fe-4S domain family. As to quaternary structure, alpha(8)-beta(8). The alpha component is a flavoprotein, the beta component is a hemoprotein. The cofactor is siroheme. [4Fe-4S] cluster serves as cofactor.

The enzyme catalyses hydrogen sulfide + 3 NADP(+) + 3 H2O = sulfite + 3 NADPH + 4 H(+). It functions in the pathway sulfur metabolism; hydrogen sulfide biosynthesis; hydrogen sulfide from sulfite (NADPH route): step 1/1. Its function is as follows. Component of the sulfite reductase complex that catalyzes the 6-electron reduction of sulfite to sulfide. This is one of several activities required for the biosynthesis of L-cysteine from sulfate. The chain is Sulfite reductase [NADPH] hemoprotein beta-component from Shewanella frigidimarina (strain NCIMB 400).